Consider the following 273-residue polypeptide: Release factor glutamine methyltransferase (273 aa).

S-adenosyl-L-methionine contacts are provided by residues 109 to 113 (GTGSG), Asp-132, Trp-159, and Asn-176. 176–179 (NPPY) contributes to the substrate binding site.

This sequence belongs to the protein N5-glutamine methyltransferase family. PrmC subfamily.

The catalysed reaction is L-glutaminyl-[peptide chain release factor] + S-adenosyl-L-methionine = N(5)-methyl-L-glutaminyl-[peptide chain release factor] + S-adenosyl-L-homocysteine + H(+). Its function is as follows. Methylates the class 1 translation termination release factors RF1/PrfA and RF2/PrfB on the glutamine residue of the universally conserved GGQ motif. In Neisseria gonorrhoeae (strain ATCC 700825 / FA 1090), this protein is Release factor glutamine methyltransferase.